The chain runs to 177 residues: MKLPKEGDFITIQSYKHDGSLHRTWRDTMVLKTTENAIIGVNDHTLVTESDGRRWVTREPAIVYFHKKYWFNIIAMIRDNGTSYYCNMASPYYXDEXALKYIDYDLDVKIFTDGEKRXLDVEEYERHKRKMNYSDDLDYILKEHVKILVXWINNGRGPFSEAYVNIWYKRYVELKNR.

Residue Arg23 is the Proton donor of the active site. Mg(2+)-binding residues include Asn87, Asp103, Asp105, Asp107, Asp120, and Glu123.

It belongs to the Ntdp family. Requires Mg(2+) as cofactor.

It carries out the reaction a ribonucleoside 5'-triphosphate + H2O = a ribonucleoside 5'-diphosphate + phosphate + H(+). It catalyses the reaction a ribonucleoside 5'-diphosphate + H2O = a ribonucleoside 5'-phosphate + phosphate + H(+). Its function is as follows. Has nucleoside phosphatase activity towards nucleoside triphosphates and nucleoside diphosphates. This is Nucleoside triphosphate/diphosphate phosphatase from Streptococcus pneumoniae serotype 19F (strain G54).